The chain runs to 328 residues: Probable cell division protein WhiA (328 aa).

The segment at residues 273-306 (SLEELGALADPPLTKDAVAGRIRRLLAMADKRAS) is a DNA-binding region (H-T-H motif).

This sequence belongs to the WhiA family. Monomer in solution.

Its function is as follows. Involved in cell division and chromosome segregation. Involved in sporulation. May coordinate the cessation of aerial hyphae growth and subsequent chromosome segregation and/or septation. Required for expression of the ParB partioning protein during sporogenesis. Activates its own transcription and represses WhiB. Binds with low affinity to its own promoter and to the Parp2 sporulation-specific promoter. Also binds directly to the RNA polymerase sigma factor WhiG, leading to inhibition of WhiG-dependent transcription in a dose-dependent manner. The sequence is that of Probable cell division protein WhiA from Streptomyces coelicolor (strain ATCC BAA-471 / A3(2) / M145).